The sequence spans 1215 residues: von Willebrand factor A domain-containing protein 5B1 (1215 aa).

An N-terminal signal peptide occupies residues Met1–Ser18. One can recognise a VIT domain in the interval Asp19–Ser141. Asn132 is a glycosylation site (N-linked (GlcNAc...) asparagine). The VWFA domain occupies Glu353–Val532. Positions Ser595 to Pro674 are disordered. Composition is skewed to polar residues over residues Gly608 to Thr621 and Tyr646 to Thr667. Phosphotyrosine is present on Tyr879. Disordered regions lie at residues Gly934–Ala953, Gln964–Ser999, and Ser1100–Ser1121. Polar residues-rich tracts occupy residues Gln964–Pro975, Gln990–Ser999, and Ser1100–Pro1112.

It is found in the secreted. In Mus musculus (Mouse), this protein is von Willebrand factor A domain-containing protein 5B1 (Vwa5b1).